Reading from the N-terminus, the 595-residue chain is Laccase-18 (595 aa).

The signal sequence occupies residues 1 to 29; sequence MEKLSTAASLFCVVVAATALAMAVVGGEA. Plastocyanin-like domains are found at residues 37–153 and 162–316; these read MVHE…PRNG and KDVP…YAGA. N-linked (GlcNAc...) asparagine glycans are attached at residues Asn-42 and Asn-48. 2 residues coordinate Cu cation: His-87 and His-89. A glycan (N-linked (GlcNAc...) asparagine) is linked at Asn-121. Positions 132 and 134 each coordinate Cu cation. N-linked (GlcNAc...) asparagine glycans are attached at residues Asn-206, Asn-345, Asn-382, Asn-402, Asn-409, Asn-439, and Asn-470. In terms of domain architecture, Plastocyanin-like 3 spans 429–571; it reads DFPVRPPRPF…ATAFIVEDGP (143 aa). Residues Asn-488, His-491, His-493, His-550, Cys-551, His-552, His-556, and Met-561 each contribute to the Cu cation site. Residues 570–595 are disordered; the sequence is GPTPETSLPPPPPEFKRCGTNGLSQP.

This sequence belongs to the multicopper oxidase family. Cu cation serves as cofactor.

Its subcellular location is the secreted. The protein localises to the extracellular space. The protein resides in the apoplast. It carries out the reaction 4 hydroquinone + O2 = 4 benzosemiquinone + 2 H2O. In terms of biological role, lignin degradation and detoxification of lignin-derived products. This chain is Laccase-18 (LAC18), found in Oryza sativa subsp. japonica (Rice).